The sequence spans 1795 residues: MQSPSIHRNTGSIIQPTVTPDARAATDLQERAEQPRQRSSHSLSSVGKRALKSVGKLFQKSKAPQQKAATPPTAKNVKTPPPASNVATPRNKARESGFSNSSPQNTHSAPKSILRNHPNQASSSGAQTHEIHPEAAPRKNLRVRFDLPQDRLERSPSYLDSDNPMTDEEAVANATRQFRSPDSHLQGSDGTRISMLATDPDQPSSSGSKIGDSDGPIPPREPMLWRSNGGRFELKDEKLVRNSEPQGSIQLDAKGKPDFSTFNTPGLAPLLDSILATPKQTYLAHQSKDGVHGHQLLQANGHLLHLAQDDSSLAVIRSSNEALLIEGKKPPAVKMEREDGNIHIDTASGRKTQELPGKAHIAHITNVLLSHDGERMRVHEDRLYQFDPISTRWKIPEGLEDTAFNSLSTGGNGSVYAKSDDAVVDLSSPFMPHVEVEDLQSFSVAPDNRAALLSGKTTQAILLTDMSPVIGGLTPKKTKGLELDGGKAQAAAVGLSGDKLFIADTQGRLYSADRSAFEGDDPKLKLMPEQANFQLEGVPLGGHNRVTGFINGDDGGVHALIKNRQGETHSHALDEQSSKLQSGWNLTNALVLNNNRGLTMPPPPTAADRLNLDRAGLVGLSEGRIQRWDATPECWKDAGIKDIDRLQRGADSNAYVLKGGKLHALKIAAEHPNMAFDRNTALAQTARSTKVEMGKEIEGLDDRVIKAFAMVSNKRFVALDDQNKLTAHSKDHKPVTLDIPGLEGDIKSLSLDEKHNLHALTSTGGLYCLPKEAWQSTKLGDQLRARWTPVALPGGQPVKALFTNDDNVLSAQIEDAEGKGLMQLKAGQWQRFEQRPVEENGLNDVHSRITGSNKTWRIPKTGLTLRMDVNTFGRSGVEKSKKASTSEFIRANIYKNTAETPRWMKNVGDHIQHRYQGRLGLKEVYETESMLFKQLELIHESGGRPPARGQDLKARITALEAKLGPQGATLVKELETLRDELENHSYTALMSIGQSYGKAKNLKQQDGILNQHGELAKPSVRMQFGKKLADLGTKLNFKSSGHDLVKELQDALTQVAPSAENPTKKLLGTLKHQGLKLSHQKADIPLGQRRDASEDHGLSKARLALDLVTLKSLGALLDQVEQLPPQSDIEPLQKKLATLRDVTYGENPVKVVTDMGFTDNKALESGYESVKTFLKSFKKADHAVSVNMRAATGSKDQAELAGKFKSMLKQLEHGDDEVGLQRSYGVNLTTPFIILADKATGLWPTAGATGNRNYILNAERCEGGVTLYLISEGAGNVSGGFGAGKDYWPGFFDANNPARSVDVGNNRTLTPNFRLGVDVTATVAASQRAGVVFNVPDEDIDAFVDDLFEGQLNPLQVLKKAVDHESYEARRFNFDLTAGGTADIRAGINLTEDRDPNADPNSDSFSAVVRGGFAANITVNLMTYTDYSLTQKNDKTELKEGGKNRPRFLNNVTAGGQLRAQIGGSHTAPTGTPASAPGPTPASQTAANNLGGALNFSVENRTVKRIKFRYNVAKPITTEGLSKLSKGLGEAFLDNTTKAKLAELADPLNARYTGKKPDEVIQAQLDGLEELFADIPPPKDNDKQYKALRDLKRAAVEHRASANKHSVMDNARFETSKTNLSGLSSESILTKIMSSVRDASAPGNATRVAEFMRQDPKLRAMLKEMEGSIGTLARVRLEPKDSLVDKIDEGSLNGTMTQSDLSSMLEDRNEMRIKRLVVFHTATQAENFTSPTPLVSYNSGANVSVTKTLGRINFVYGADQDKPIGYTFDGELSRPSASLKEAAGDLKKEGFELKS.

Residues 1 to 18 (MQSPSIHRNTGSIIQPTV) show a composition bias toward polar residues. Residues 1–227 (MQSPSIHRNT…PPREPMLWRS (227 aa)) are disordered. Low complexity predominate over residues 60-75 (KSKAPQQKAATPPTAK). Composition is skewed to polar residues over residues 97-109 (GFSN…THSA) and 117-127 (HPNQASSSGAQ). Residues 129 to 154 (HEIHPEAAPRKNLRVRFDLPQDRLER) show a composition bias toward basic and acidic residues. Over residues 174–191 (ATRQFRSPDSHLQGSDGT) the composition is skewed to polar residues. Over residues 203–215 (PSSSGSKIGDSDG) the composition is skewed to low complexity. Short sequence motifs (wxxxE) lie at residues 393–397 (WKIPE) and 829–833 (WQRFE). A disordered region spans residues 1461–1488 (QIGGSHTAPTGTPASAPGPTPASQTAAN). The span at 1467-1487 (TAPTGTPASAPGPTPASQTAA) shows a compositional bias: low complexity. Positions 1787 to 1790 (KKEG) match the ERMRS motif.

It belongs to the AvrE family. In terms of assembly, in planta interaction assays, interacts with the A.thaliana protein phosphatase 2A (PP2A) via direct interaction/association with specific B' regulatory subunits.

It localises to the secreted. The protein localises to the host cell. The protein resides in the host cell membrane. Its activity is regulated as follows. Polyamidoamine dendrimers inhibit channel and virulence activities. Functionally, major virulence factor that may function as a water- and solute-permeable channel dedicated to creating osmotic/water potential perturbation and a water- and nutrient-rich apoplast in which bacteria multiply within the infected plant tissues. Expression in Xenopus oocytes results in inward and outward currents, permeability to water and osmolarity-dependent oocyte swelling and bursting. Its function is as follows. Elicits cell death in host tomato leaves and in non-host Nicotiana tabacum leaves. Acts within plant cells and promotes lesion formation. The combined action of AvrE and HopM1 is particularly important in promoting bacterial growth in plants. Contributes to the down-regulation of a specific subset of A.thaliana genes during infection, including NHL13, which is required for antibacterial immunity. The sequence is that of Type III effector AvrE from Pseudomonas syringae pv. tomato (strain ATCC BAA-871 / DC3000).